Consider the following 427-residue polypeptide: Adenylosuccinate synthetase (427 aa).

GTP is bound by residues 12-18 and 40-42; these read GDEGKGK and GHT. Residue Asp13 is the Proton acceptor of the active site. The Mg(2+) site is built by Asp13 and Gly40. IMP is bound by residues 13–16, 38–41, Thr128, Arg142, Gln223, Thr238, and Arg302; these read DEGK and NAGH. His41 acts as the Proton donor in catalysis. 298–304 is a substrate binding site; sequence TTTGRPR. GTP contacts are provided by residues Arg304, 330 to 332, and 412 to 414; these read KLD and AVG.

Belongs to the adenylosuccinate synthetase family. As to quaternary structure, homodimer. Mg(2+) serves as cofactor.

It is found in the cytoplasm. It catalyses the reaction IMP + L-aspartate + GTP = N(6)-(1,2-dicarboxyethyl)-AMP + GDP + phosphate + 2 H(+). It functions in the pathway purine metabolism; AMP biosynthesis via de novo pathway; AMP from IMP: step 1/2. Its function is as follows. Plays an important role in the de novo pathway of purine nucleotide biosynthesis. Catalyzes the first committed step in the biosynthesis of AMP from IMP. The sequence is that of Adenylosuccinate synthetase from Heliobacterium modesticaldum (strain ATCC 51547 / Ice1).